Here is a 366-residue protein sequence, read N- to C-terminus: Putative agmatine deiminase (366 aa).

The active-site Amidino-cysteine intermediate is the C357.

The protein belongs to the agmatine deiminase family.

The catalysed reaction is agmatine + H2O = N-carbamoylputrescine + NH4(+). The sequence is that of Putative agmatine deiminase from Lactococcus lactis subsp. lactis (strain IL1403) (Streptococcus lactis).